The following is a 95-amino-acid chain: Aspartyl/glutamyl-tRNA(Asn/Gln) amidotransferase subunit C (95 aa).

It belongs to the GatC family. Heterotrimer of A, B and C subunits.

The enzyme catalyses L-glutamyl-tRNA(Gln) + L-glutamine + ATP + H2O = L-glutaminyl-tRNA(Gln) + L-glutamate + ADP + phosphate + H(+). It carries out the reaction L-aspartyl-tRNA(Asn) + L-glutamine + ATP + H2O = L-asparaginyl-tRNA(Asn) + L-glutamate + ADP + phosphate + 2 H(+). Its function is as follows. Allows the formation of correctly charged Asn-tRNA(Asn) or Gln-tRNA(Gln) through the transamidation of misacylated Asp-tRNA(Asn) or Glu-tRNA(Gln) in organisms which lack either or both of asparaginyl-tRNA or glutaminyl-tRNA synthetases. The reaction takes place in the presence of glutamine and ATP through an activated phospho-Asp-tRNA(Asn) or phospho-Glu-tRNA(Gln). This chain is Aspartyl/glutamyl-tRNA(Asn/Gln) amidotransferase subunit C, found in Chelativorans sp. (strain BNC1).